The primary structure comprises 292 residues: Glycine--tRNA ligase alpha subunit (292 aa).

This sequence belongs to the class-II aminoacyl-tRNA synthetase family. As to quaternary structure, tetramer of two alpha and two beta subunits.

It localises to the cytoplasm. It carries out the reaction tRNA(Gly) + glycine + ATP = glycyl-tRNA(Gly) + AMP + diphosphate. In Desulfovibrio desulfuricans (strain ATCC 27774 / DSM 6949 / MB), this protein is Glycine--tRNA ligase alpha subunit.